The following is a 554-amino-acid chain: Outer envelope protein 61 (554 aa).

The Cytoplasmic segment spans residues 1 to 525 (MFNGLMDPEM…GMEKAKKAKK (525 aa)). 2 TPR repeats span residues 103 to 136 (AQML…LKEI) and 180 to 213 (VKAL…SPED). Disordered stretches follow at residues 245–269 (TEEN…AQGV) and 395–439 (APAS…PSAP). The segment covering 254–263 (ENKKPSKEAN) has biased composition (basic and acidic residues). The span at 412-423 (SLGASGSSSGNS) shows a compositional bias: low complexity. Residues 526-546 (WLFGKGGLIFAILMLVLAMVL) traverse the membrane as a helical segment. Residues 547–554 (HRLGYIGN) lie on the Lumenal side of the membrane.

As to quaternary structure, interacts (via TPR region) with HSP70-1, but not with HSP90-2. Interacts with ERDJ2A and ERDJ2B. In the ER membrane, associates with ERDJ2 in membrane complexes of 140 and 200 kDa and specifically interacts with the HSP70 and HSP90 chaperones via its TPR domain. Ubiquitous. Highest expression in leaves and lowest in roots.

The protein localises to the endoplasmic reticulum membrane. The protein resides in the plastid. Its subcellular location is the chloroplast outer membrane. Its function is as follows. Plays a role in protein import into the endoplasmic reticulum (ER). May function as chaperone docking protein during post-translational protein translocation into the ER. Chaperone receptor mediating Hsp70-dependent protein targeting to chloroplasts. Interacts specifically with some chloroplast precursors, but not with mitochondrial precursors. Able to select precursors for delivery to the chloroplast translocase independently of Hsp70. In Arabidopsis thaliana (Mouse-ear cress), this protein is Outer envelope protein 61 (OEP61).